The primary structure comprises 214 residues: Imidazole glycerol phosphate synthase subunit HisH (214 aa).

One can recognise a Glutamine amidotransferase type-1 domain in the interval 3-211; it reads TIAVIDYDMG…VSKVIPKNLA (209 aa). The Nucleophile role is filled by Cys-81. Active-site residues include His-186 and Glu-188.

In terms of assembly, heterodimer of HisH and HisF.

The protein localises to the cytoplasm. It carries out the reaction 5-[(5-phospho-1-deoxy-D-ribulos-1-ylimino)methylamino]-1-(5-phospho-beta-D-ribosyl)imidazole-4-carboxamide + L-glutamine = D-erythro-1-(imidazol-4-yl)glycerol 3-phosphate + 5-amino-1-(5-phospho-beta-D-ribosyl)imidazole-4-carboxamide + L-glutamate + H(+). The catalysed reaction is L-glutamine + H2O = L-glutamate + NH4(+). It participates in amino-acid biosynthesis; L-histidine biosynthesis; L-histidine from 5-phospho-alpha-D-ribose 1-diphosphate: step 5/9. In terms of biological role, IGPS catalyzes the conversion of PRFAR and glutamine to IGP, AICAR and glutamate. The HisH subunit catalyzes the hydrolysis of glutamine to glutamate and ammonia as part of the synthesis of IGP and AICAR. The resulting ammonia molecule is channeled to the active site of HisF. In Trichodesmium erythraeum (strain IMS101), this protein is Imidazole glycerol phosphate synthase subunit HisH.